A 159-amino-acid polypeptide reads, in one-letter code: Ribosomal RNA large subunit methyltransferase H (159 aa).

S-adenosyl-L-methionine is bound by residues Leu76, Gly108, and 127–132 (LSKMTY).

This sequence belongs to the RNA methyltransferase RlmH family. As to quaternary structure, homodimer.

It is found in the cytoplasm. It carries out the reaction pseudouridine(1915) in 23S rRNA + S-adenosyl-L-methionine = N(3)-methylpseudouridine(1915) in 23S rRNA + S-adenosyl-L-homocysteine + H(+). In terms of biological role, specifically methylates the pseudouridine at position 1915 (m3Psi1915) in 23S rRNA. This Ruminiclostridium cellulolyticum (strain ATCC 35319 / DSM 5812 / JCM 6584 / H10) (Clostridium cellulolyticum) protein is Ribosomal RNA large subunit methyltransferase H.